The primary structure comprises 293 residues: Protein Pat (293 aa).

A BEN domain is found at 187-287 (LPDIILNPLD…LLLRTRQDRA (101 aa)).

As to quaternary structure, interacts with poc1b. An mRNA and protein component of germ plasm and primordial germ cells (PGCs) throughout oogenesis and early development, being first localized to the granulo-fibrillar material (GFM) of the mitochondrial cloud in stage I and II oocytes and to the periphery of mature germinal granules both in oocytes and in embryos. Shows some somatic expression including the ectodermal cells of tailbud embryos. In adults, only expressed in ovaries.

The protein resides in the cytoplasm. It localises to the nucleus. Functionally, probably plays a role in germ plasm formation, positioning and maintenance. The polypeptide is Protein Pat (Xenopus laevis (African clawed frog)).